The primary structure comprises 428 residues: Histidine--tRNA ligase (428 aa).

Belongs to the class-II aminoacyl-tRNA synthetase family. As to quaternary structure, homodimer.

It localises to the cytoplasm. The catalysed reaction is tRNA(His) + L-histidine + ATP = L-histidyl-tRNA(His) + AMP + diphosphate + H(+). The chain is Histidine--tRNA ligase from Bordetella bronchiseptica (strain ATCC BAA-588 / NCTC 13252 / RB50) (Alcaligenes bronchisepticus).